Reading from the N-terminus, the 282-residue chain is Pantothenate synthetase (282 aa).

Residue 30–37 (MGYLHEGH) participates in ATP binding. H37 (proton donor) is an active-site residue. Q61 contributes to the (R)-pantoate binding site. Q61 lines the beta-alanine pocket. Residue 147–150 (GMKD) coordinates ATP. Q153 provides a ligand contact to (R)-pantoate. Residues V176 and 184 to 187 (KSSR) contribute to the ATP site.

This sequence belongs to the pantothenate synthetase family. As to quaternary structure, homodimer.

The protein localises to the cytoplasm. The enzyme catalyses (R)-pantoate + beta-alanine + ATP = (R)-pantothenate + AMP + diphosphate + H(+). It participates in cofactor biosynthesis; (R)-pantothenate biosynthesis; (R)-pantothenate from (R)-pantoate and beta-alanine: step 1/1. In terms of biological role, catalyzes the condensation of pantoate with beta-alanine in an ATP-dependent reaction via a pantoyl-adenylate intermediate. In Bacillus mycoides (strain KBAB4) (Bacillus weihenstephanensis), this protein is Pantothenate synthetase.